We begin with the raw amino-acid sequence, 834 residues long: DNA-directed RNA polymerase subunit beta' (834 aa).

Residues C88, C90, C104, and C107 each contribute to the Zn(2+) site. The Mg(2+) site is built by D641, D643, and D645.

It belongs to the RNA polymerase beta' chain family. RpoC1 subfamily. In plastids the minimal PEP RNA polymerase catalytic core is composed of four subunits: alpha, beta, beta', and beta''. When a (nuclear-encoded) sigma factor is associated with the core the holoenzyme is formed, which can initiate transcription. Mg(2+) is required as a cofactor. The cofactor is Zn(2+).

It localises to the plastid. It carries out the reaction RNA(n) + a ribonucleoside 5'-triphosphate = RNA(n+1) + diphosphate. DNA-dependent RNA polymerase catalyzes the transcription of DNA into RNA using the four ribonucleoside triphosphates as substrates. In Helicosporidium sp. subsp. Simulium jonesii (Green alga), this protein is DNA-directed RNA polymerase subunit beta' (rpoC1).